Here is a 277-residue protein sequence, read N- to C-terminus: Orotidine 5'-phosphate decarboxylase (277 aa).

Residues aspartate 40, 62 to 64 (KTH), 93 to 102 (DRKFIDIGNT), tyrosine 229, and arginine 247 contribute to the substrate site. Lysine 95 acts as the Proton donor in catalysis.

Belongs to the OMP decarboxylase family.

The enzyme catalyses orotidine 5'-phosphate + H(+) = UMP + CO2. The protein operates within pyrimidine metabolism; UMP biosynthesis via de novo pathway; UMP from orotate: step 2/2. The chain is Orotidine 5'-phosphate decarboxylase (pyrG) from Aspergillus awamori (Black koji mold).